The chain runs to 548 residues: Aromatic ammonia-lyase (548 aa).

The active-site Proton donor/acceptor is the tyrosine 55. Positions 144–146 (ASG) form a cross-link, 5-imidazolinone (Ala-Gly). A 2,3-didehydroalanine (Ser) modification is found at serine 145. (E)-cinnamate is bound by residues asparagine 200, glutamine 288, arginine 294, asparagine 324, lysine 396, glutamate 425, and asparagine 428.

This sequence belongs to the PAL/histidase family. As to quaternary structure, homotetramer. Contains an active site 4-methylidene-imidazol-5-one (MIO), which is formed autocatalytically by cyclization and dehydration of residues Ala-Ser-Gly.

It carries out the reaction L-phenylalanine = (E)-cinnamate + NH4(+). The enzyme catalyses L-tyrosine = (E)-4-coumarate + NH4(+). The catalysed reaction is 3,4-dimethoxy-L-phenylalanine = 3,4-dimethoxy-(E)-cinnamate + NH4(+). The protein operates within phenylpropanoid metabolism; trans-cinnamate biosynthesis; trans-cinnamate from L-phenylalanine: step 1/1. In terms of biological role, aromatic ammonia-lyase (AAL) that shows reduced activity to catalyze the non-oxidative ammonia elimination from the canonical AAL substrates L-Phe and L-Tyr, contrasted by its pronounced efficiency towards substrates with electron-donor aromatic substituents such as 3,4-dimethoxy-L-phenylalanine. Is also able to catalyze the reverse reaction in vitro, i.e. the ammonia addition reaction to cinnamate derivatives, producing enantiopure phenylalanine derivatives. Shows no activity with L-His. This chain is Aromatic ammonia-lyase, found in Loktanella atrilutea.